Consider the following 116-residue polypeptide: Ino eighty subunit 4 (116 aa).

The span at 1 to 15 (MSQESSVLSESQEQL) shows a compositional bias: low complexity. Disordered regions lie at residues 1-40 (MSQE…PVLP) and 70-116 (EERQ…GLDS). Residues 84–108 (KGSDDKATRKKEPADEDPEVKQLEK) show a composition bias toward basic and acidic residues.

As to quaternary structure, component of the chromatin-remodeling INO80 complex, at least composed of ARP4, ARP5, ARP8, RVB1, RVB2, TAF14, NHP10, IES1, IES3, IES4, IES6, ACT1, IES2, IES5 and INO80.

The protein localises to the nucleus. The polypeptide is Ino eighty subunit 4 (IES4) (Saccharomyces cerevisiae (strain ATCC 204508 / S288c) (Baker's yeast)).